The following is a 97-amino-acid chain: YcgL domain-containing protein PMI1171 (97 aa).

Positions 3-87 constitute a YcgL domain; the sequence is MICAIYRSTK…PVESMLNAYL (85 aa).

This chain is YcgL domain-containing protein PMI1171, found in Proteus mirabilis (strain HI4320).